The sequence spans 575 residues: Alpha-(1,6)-fucosyltransferase (575 aa).

The Cytoplasmic segment spans residues 1–9 (MRAWTGSWR). A helical; Signal-anchor for type II membrane protein membrane pass occupies residues 10-30 (WIMLILFAWGTLLFYIGGHLV). Residues 31–575 (RDNDHPDHSS…KYPTYPEAEK (545 aa)) are Lumenal-facing. Intrachain disulfides connect Cys-204/Cys-266, Cys-212/Cys-230, and Cys-218/Cys-222. The GT23 domain occupies 206-493 (KARKLVCNIN…PDASANFHSL (288 aa)). Ser-278 bears the Phosphoserine mark. The SH3-binding signature appears at 299–305 (PRPPYLP). The interval 365 to 366 (RR) is important for donor substrate binding. A disulfide bridge links Cys-465 with Cys-472. The region spanning 502–563 (QNAHNQIAVY…PSYKVREKIE (62 aa)) is the SH3 domain.

It belongs to the glycosyltransferase 23 family. In terms of processing, tyrosine phosphorylated by PKDCC/VLK.

It localises to the golgi apparatus. Its subcellular location is the golgi stack membrane. The catalysed reaction is N(4)-{beta-D-GlcNAc-(1-&gt;2)-alpha-D-Man-(1-&gt;3)-[beta-D-GlcNAc-(1-&gt;2)-alpha-D-Man-(1-&gt;6)]-beta-D-Man-(1-&gt;4)-beta-D-GlcNAc-(1-&gt;4)-beta-D-GlcNAc}-L-asparaginyl-[protein] + GDP-beta-L-fucose = an N(4)-{beta-D-GlcNAc-(1-&gt;2)-alpha-D-Man-(1-&gt;3)-[beta-D-GlcNAc-(1-&gt;2)-alpha-D-Man-(1-&gt;6)]-beta-D-Man-(1-&gt;4)-beta-D-GlcNAc-(1-&gt;4)-[alpha-L-Fuc-(1-&gt;6)]-beta-D-GlcNAc}-L-asparaginyl-[protein] + GDP + H(+). The protein operates within protein modification; protein glycosylation. Catalyzes the addition of fucose in alpha 1-6 linkage to the first GlcNAc residue, next to the peptide chains in N-glycans. The polypeptide is Alpha-(1,6)-fucosyltransferase (Fut8) (Rattus norvegicus (Rat)).